We begin with the raw amino-acid sequence, 272 residues long: Shikimate dehydrogenase (NADP(+)) (272 aa).

Residues 14–16 and Thr-61 contribute to the shikimate site; that span reads SKS. Catalysis depends on Lys-65, which acts as the Proton acceptor. Glu-77 is a binding site for NADP(+). Residues Asn-86 and Asp-102 each coordinate shikimate. Residues 126 to 130, 149 to 154, and Met-213 each bind NADP(+); these read GAGGA and NRTVSR. Position 215 (Tyr-215) interacts with shikimate. Gly-237 lines the NADP(+) pocket.

The protein belongs to the shikimate dehydrogenase family. Homodimer.

The enzyme catalyses shikimate + NADP(+) = 3-dehydroshikimate + NADPH + H(+). Its pathway is metabolic intermediate biosynthesis; chorismate biosynthesis; chorismate from D-erythrose 4-phosphate and phosphoenolpyruvate: step 4/7. Involved in the biosynthesis of the chorismate, which leads to the biosynthesis of aromatic amino acids. Catalyzes the reversible NADPH linked reduction of 3-dehydroshikimate (DHSA) to yield shikimate (SA). In Shigella boydii serotype 18 (strain CDC 3083-94 / BS512), this protein is Shikimate dehydrogenase (NADP(+)).